The chain runs to 197 residues: Imidazoleglycerol-phosphate dehydratase (197 aa).

Belongs to the imidazoleglycerol-phosphate dehydratase family.

Its subcellular location is the cytoplasm. The enzyme catalyses D-erythro-1-(imidazol-4-yl)glycerol 3-phosphate = 3-(imidazol-4-yl)-2-oxopropyl phosphate + H2O. It participates in amino-acid biosynthesis; L-histidine biosynthesis; L-histidine from 5-phospho-alpha-D-ribose 1-diphosphate: step 6/9. In Syntrophomonas wolfei subsp. wolfei (strain DSM 2245B / Goettingen), this protein is Imidazoleglycerol-phosphate dehydratase.